We begin with the raw amino-acid sequence, 42 residues long: Large ribosomal subunit protein bL36 (42 aa).

Belongs to the bacterial ribosomal protein bL36 family.

This Ehrlichia canis (strain Jake) protein is Large ribosomal subunit protein bL36.